The following is a 200-amino-acid chain: Protein GrpE (200 aa).

It belongs to the GrpE family. Homodimer.

The protein localises to the cytoplasm. Functionally, participates actively in the response to hyperosmotic and heat shock by preventing the aggregation of stress-denatured proteins, in association with DnaK and GrpE. It is the nucleotide exchange factor for DnaK and may function as a thermosensor. Unfolded proteins bind initially to DnaJ; upon interaction with the DnaJ-bound protein, DnaK hydrolyzes its bound ATP, resulting in the formation of a stable complex. GrpE releases ADP from DnaK; ATP binding to DnaK triggers the release of the substrate protein, thus completing the reaction cycle. Several rounds of ATP-dependent interactions between DnaJ, DnaK and GrpE are required for fully efficient folding. The chain is Protein GrpE from Shewanella piezotolerans (strain WP3 / JCM 13877).